We begin with the raw amino-acid sequence, 566 residues long: Phenylalanine--tRNA ligase beta subunit (566 aa).

A B5 domain is found at 287-362 (YFQEEVEFDV…IGEGLASFYP (76 aa)). 4 residues coordinate Mg(2+): Asp-340, Asp-346, Glu-349, and Asp-350.

It belongs to the phenylalanyl-tRNA synthetase beta subunit family. Type 2 subfamily. As to quaternary structure, tetramer of two alpha and two beta subunits. The cofactor is Mg(2+).

It is found in the cytoplasm. It catalyses the reaction tRNA(Phe) + L-phenylalanine + ATP = L-phenylalanyl-tRNA(Phe) + AMP + diphosphate + H(+). The chain is Phenylalanine--tRNA ligase beta subunit from Borrelia garinii subsp. bavariensis (strain ATCC BAA-2496 / DSM 23469 / PBi) (Borreliella bavariensis).